Consider the following 206-residue polypeptide: Small ribosomal subunit protein uS4 (206 aa).

The region spanning Cys-96–Glu-160 is the S4 RNA-binding domain.

It belongs to the universal ribosomal protein uS4 family. In terms of assembly, part of the 30S ribosomal subunit. Contacts protein S5. The interaction surface between S4 and S5 is involved in control of translational fidelity.

One of the primary rRNA binding proteins, it binds directly to 16S rRNA where it nucleates assembly of the body of the 30S subunit. Its function is as follows. With S5 and S12 plays an important role in translational accuracy. The protein is Small ribosomal subunit protein uS4 of Pseudomonas putida (strain GB-1).